A 629-amino-acid polypeptide reads, in one-letter code: 1-deoxy-D-xylulose-5-phosphate synthase (629 aa).

Thiamine diphosphate contacts are provided by residues histidine 72 and 113 to 115 (GHA). Aspartate 144 lines the Mg(2+) pocket. Thiamine diphosphate is bound by residues 145–146 (GA), asparagine 174, tyrosine 287, and glutamate 370. Asparagine 174 contributes to the Mg(2+) binding site.

The protein belongs to the transketolase family. DXPS subfamily. Homodimer. Mg(2+) serves as cofactor. Thiamine diphosphate is required as a cofactor.

It carries out the reaction D-glyceraldehyde 3-phosphate + pyruvate + H(+) = 1-deoxy-D-xylulose 5-phosphate + CO2. Its pathway is metabolic intermediate biosynthesis; 1-deoxy-D-xylulose 5-phosphate biosynthesis; 1-deoxy-D-xylulose 5-phosphate from D-glyceraldehyde 3-phosphate and pyruvate: step 1/1. Catalyzes the acyloin condensation reaction between C atoms 2 and 3 of pyruvate and glyceraldehyde 3-phosphate to yield 1-deoxy-D-xylulose-5-phosphate (DXP). This chain is 1-deoxy-D-xylulose-5-phosphate synthase, found in Prochlorococcus marinus (strain AS9601).